Consider the following 553-residue polypeptide: Transcription factor GAMYB (553 aa).

Basic and acidic residues predominate over residues 1–17 (MYRVKSESDCEMIHQEQ). The interval 1–45 (MYRVKSESDCEMIHQEQMDSPVADDGSSGGSPHRGGGPPLKKGPW) is disordered. Positions 27–38 (SSGGSPHRGGGP) are enriched in gly residues. HTH myb-type domains follow at residues 37-89 (GPPL…ANHL) and 90-144 (RPNL…KRCQ). 2 consecutive DNA-binding regions (H-T-H motif) follow at residues 65-89 (WNAVQKNTGLFRCGKSCRLRWANHL) and 117-140 (WARMAAHLPGRTDNEIKNYWNTRI). A disordered region spans residues 464-488 (PAQSTSMGSGEQVMGPKYEPGDTSP).

The protein localises to the nucleus. Transcriptional activator of gibberellin-dependent alpha-amylase expression in aleurone cells. Involved in pollen and floral organs development. May bind to the 5'-TAACAAA-3' box of alpha-amylase promoter. This Oryza sativa subsp. indica (Rice) protein is Transcription factor GAMYB (GAM1).